Consider the following 264-residue polypeptide: Triosephosphate isomerase (264 aa).

13-15 contributes to the substrate binding site; that stretch reads NWK. Catalysis depends on His-106, which acts as the Electrophile. Glu-179 functions as the Proton acceptor in the catalytic mechanism. Substrate-binding positions include Gly-185, Ser-223, and 244–245; that span reads GG.

The protein belongs to the triosephosphate isomerase family. As to quaternary structure, homodimer.

The protein localises to the cytoplasm. It carries out the reaction D-glyceraldehyde 3-phosphate = dihydroxyacetone phosphate. It participates in carbohydrate biosynthesis; gluconeogenesis. Its pathway is carbohydrate degradation; glycolysis; D-glyceraldehyde 3-phosphate from glycerone phosphate: step 1/1. Functionally, involved in the gluconeogenesis. Catalyzes stereospecifically the conversion of dihydroxyacetone phosphate (DHAP) to D-glyceraldehyde-3-phosphate (G3P). This chain is Triosephosphate isomerase, found in Acinetobacter baumannii (strain AB0057).